Here is a 974-residue protein sequence, read N- to C-terminus: Ovochymase-2 (974 aa).

Positions 1–21 (MAETSIFPIMMLTVMIGVGRG) are cleaved as a signal peptide. Residues 22 to 49 (VTDSPGRVSRCGERPAANTSVSYGLLSR) constitute a propeptide, activation peptide. A glycan (N-linked (GlcNAc...) asparagine) is linked at asparagine 39. Residues 50–299 (IVGGTSAVKG…LLNWLSENLN (250 aa)) form the Peptidase S1 1 domain. A disulfide bridge links cysteine 75 with cysteine 91. The active-site Charge relay system is histidine 90. The Ca(2+) site is built by valine 112 and glutamate 117. Aspartate 140 serves as the catalytic Charge relay system. 11 disulfide bridges follow: cysteine 174–cysteine 244, cysteine 205–cysteine 223, cysteine 234–cysteine 263, cysteine 312–cysteine 342, cysteine 369–cysteine 388, cysteine 435–cysteine 462, cysteine 489–cysteine 510, cysteine 615–cysteine 631, cysteine 713–cysteine 776, cysteine 741–cysteine 754, and cysteine 766–cysteine 795. Serine 238 acts as the Charge relay system in catalysis. CUB domains are found at residues 312-425 (CSTN…YEAV) and 435-547 (CGSV…ISFV). Residues 590-819 (LIKAEEAMPN…FIPWIMETIL (230 aa)) form the Peptidase S1 2 domain. The propeptide at 590–974 (LIKAEEAMPN…WLSYSFHNQN (385 aa)) is activation peptide. Asparagine 763 carries N-linked (GlcNAc...) asparagine glycosylation. The interval 830 to 858 (EPHHPLFPPDKPSQQKALLPDSPPSSSSQ) is disordered. An N-linked (GlcNAc...) asparagine glycan is attached at asparagine 926.

It belongs to the peptidase S1 family. In terms of processing, the catalytically inactive 107 kDa form is processed both N- and C-terminally to give rise to the 66 kDa catalytically active form and inactive forms of 82 kDa and 59 kDa. In terms of tissue distribution, expressed specifically in the cells lining the bottom of epithelial folds in the oviductal pars recta.

It is found in the secreted. The enzyme catalyses Preferential cleavage at 371-Gly-Ser-Arg-|-Trp-374 of glycoprotein gp43 in Xenopus laevis coelemic egg envelope to yield gp41.. Its function is as follows. Mediates gamete interaction by affecting the vitelline coat. This Bufo japonicus (Japanese common toad) protein is Ovochymase-2 (OVCH2).